The following is a 448-amino-acid chain: Tubulin beta chain (448 aa).

8 residues coordinate GTP: glutamine 11, glutamate 69, serine 138, glycine 142, threonine 143, glycine 144, asparagine 204, and asparagine 226. Glutamate 69 lines the Mg(2+) pocket. Residues 426–448 are disordered; the sequence is QDAGIDEEEEEYEEEAPVDEPLE. The segment covering 429–448 has biased composition (acidic residues); the sequence is GIDEEEEEYEEEAPVDEPLE.

Belongs to the tubulin family. Dimer of alpha and beta chains. A typical microtubule is a hollow water-filled tube with an outer diameter of 25 nm and an inner diameter of 15 nM. Alpha-beta heterodimers associate head-to-tail to form protofilaments running lengthwise along the microtubule wall with the beta-tubulin subunit facing the microtubule plus end conferring a structural polarity. Microtubules usually have 13 protofilaments but different protofilament numbers can be found in some organisms and specialized cells. It depends on Mg(2+) as a cofactor.

The protein resides in the cytoplasm. It localises to the cytoskeleton. In terms of biological role, tubulin is the major constituent of microtubules, a cylinder consisting of laterally associated linear protofilaments composed of alpha- and beta-tubulin heterodimers. Microtubules grow by the addition of GTP-tubulin dimers to the microtubule end, where a stabilizing cap forms. Below the cap, tubulin dimers are in GDP-bound state, owing to GTPase activity of alpha-tubulin. In Epichloe coenophiala (Tall fescue endophyte fungus), this protein is Tubulin beta chain (TUB2).